Reading from the N-terminus, the 206-residue chain is uncharacterized protein (206 aa).

This is an uncharacterized protein from Methanocaldococcus jannaschii (strain ATCC 43067 / DSM 2661 / JAL-1 / JCM 10045 / NBRC 100440) (Methanococcus jannaschii).